The following is a 325-amino-acid chain: uncharacterized protein (325 aa).

The tract at residues 108–141 is disordered; the sequence is PHRTQGISSTSSKSSKGGKKTPVRSTPKEIKKAT.

This is an uncharacterized protein from Homo sapiens (Human).